Here is a 268-residue protein sequence, read N- to C-terminus: Urease accessory protein UreD (268 aa).

This sequence belongs to the UreD family. In terms of assembly, ureD, UreF and UreG form a complex that acts as a GTP-hydrolysis-dependent molecular chaperone, activating the urease apoprotein by helping to assemble the nickel containing metallocenter of UreC. The UreE protein probably delivers the nickel.

It localises to the cytoplasm. In terms of biological role, required for maturation of urease via the functional incorporation of the urease nickel metallocenter. In Lysinibacillus sphaericus (strain C3-41), this protein is Urease accessory protein UreD.